Reading from the N-terminus, the 921-residue chain is Eukaryotic translation initiation factor 3 subunit A (921 aa).

Residues 319 to 493 form the PCI domain; the sequence is FKFYASQLVL…GVVSFMEDPF (175 aa). The interval 497-524 is disordered; sequence GGSTATNADDEQRNDDGYEETHVEEEPE. The span at 506 to 517 shows a compositional bias: basic and acidic residues; the sequence is DEQRNDDGYEET. 2 coiled-coil regions span residues 562 to 647 and 693 to 868; these read ARNE…NEKT and ERMS…IKRN. The span at 818-865 shows a compositional bias: basic and acidic residues; the sequence is AAKEHDDRQRMLQDRLTKERKERERVNKEKDEAARKQREIEEAVERTI. Residues 818–921 are disordered; sequence AAKEHDDRQR…KMKLRRAGRA (104 aa). A compositionally biased stretch (pro residues) spans 873–890; it reads PAPPVRSAPPARAAPPPR. Residues 903-913 are compositionally biased toward basic and acidic residues; sequence PEKKLTYAEKM.

The protein belongs to the eIF-3 subunit A family. As to quaternary structure, component of the eukaryotic translation initiation factor 3 (eIF-3) complex.

The protein resides in the cytoplasm. RNA-binding component of the eukaryotic translation initiation factor 3 (eIF-3) complex, which is involved in protein synthesis of a specialized repertoire of mRNAs and, together with other initiation factors, stimulates binding of mRNA and methionyl-tRNAi to the 40S ribosome. The eIF-3 complex specifically targets and initiates translation of a subset of mRNAs involved in cell proliferation. The sequence is that of Eukaryotic translation initiation factor 3 subunit A from Eremothecium gossypii (strain ATCC 10895 / CBS 109.51 / FGSC 9923 / NRRL Y-1056) (Yeast).